Here is a 21-residue protein sequence, read N- to C-terminus: 5-methyltetrahydropteroyltriglutamate--homocysteine methyltransferase (21 aa).

Belongs to the vitamin-B12 independent methionine synthase family. Zn(2+) is required as a cofactor.

It is found in the cytoplasm. It catalyses the reaction 5-methyltetrahydropteroyltri-L-glutamate + L-homocysteine = tetrahydropteroyltri-L-glutamate + L-methionine. It functions in the pathway amino-acid biosynthesis; L-methionine biosynthesis via de novo pathway; L-methionine from L-homocysteine (MetE route): step 1/1. Functionally, catalyzes the transfer of a methyl group from 5-methyltetrahydrofolate to homocysteine resulting in methionine formation. This Populus euphratica (Euphrates poplar) protein is 5-methyltetrahydropteroyltriglutamate--homocysteine methyltransferase.